Reading from the N-terminus, the 462-residue chain is L-seryl-tRNA(Sec) selenium transferase (462 aa).

N6-(pyridoxal phosphate)lysine is present on lysine 292.

Belongs to the SelA family. Pyridoxal 5'-phosphate serves as cofactor.

It localises to the cytoplasm. The catalysed reaction is L-seryl-tRNA(Sec) + selenophosphate + H(+) = L-selenocysteinyl-tRNA(Sec) + phosphate. Its pathway is aminoacyl-tRNA biosynthesis; selenocysteinyl-tRNA(Sec) biosynthesis; selenocysteinyl-tRNA(Sec) from L-seryl-tRNA(Sec) (bacterial route): step 1/1. Converts seryl-tRNA(Sec) to selenocysteinyl-tRNA(Sec) required for selenoprotein biosynthesis. The chain is L-seryl-tRNA(Sec) selenium transferase from Geobacter metallireducens (strain ATCC 53774 / DSM 7210 / GS-15).